We begin with the raw amino-acid sequence, 260 residues long: Cytochrome c oxidase subunit 3 (260 aa).

7 helical membrane-spanning segments follow: residues 14-34, 41-61, 81-101, 126-146, 158-178, 196-216, and 238-258; these read PWPLTGAISALMMTSGLILWF, LLLAGTILLLLTVINWWRDVI, GMILFITSEVCFFFAFFWAFF, FLVPLLNTAVLLSSGVTVTWA, AIQGLFLTVILGIYFTGLQAW, FFVATGFHGLHVLIGTTFLFI, and AWYWHFVDVVWLFLYICICWW.

It belongs to the cytochrome c oxidase subunit 3 family. Component of the cytochrome c oxidase (complex IV, CIV), a multisubunit enzyme composed of a catalytic core of 3 subunits and several supernumerary subunits. The complex exists as a monomer or a dimer and forms supercomplexes (SCs) in the inner mitochondrial membrane with ubiquinol-cytochrome c oxidoreductase (cytochrome b-c1 complex, complex III, CIII).

Its subcellular location is the mitochondrion inner membrane. It catalyses the reaction 4 Fe(II)-[cytochrome c] + O2 + 8 H(+)(in) = 4 Fe(III)-[cytochrome c] + 2 H2O + 4 H(+)(out). Functionally, component of the cytochrome c oxidase, the last enzyme in the mitochondrial electron transport chain which drives oxidative phosphorylation. The respiratory chain contains 3 multisubunit complexes succinate dehydrogenase (complex II, CII), ubiquinol-cytochrome c oxidoreductase (cytochrome b-c1 complex, complex III, CIII) and cytochrome c oxidase (complex IV, CIV), that cooperate to transfer electrons derived from NADH and succinate to molecular oxygen, creating an electrochemical gradient over the inner membrane that drives transmembrane transport and the ATP synthase. Cytochrome c oxidase is the component of the respiratory chain that catalyzes the reduction of oxygen to water. Electrons originating from reduced cytochrome c in the intermembrane space (IMS) are transferred via the dinuclear copper A center (CU(A)) of subunit 2 and heme A of subunit 1 to the active site in subunit 1, a binuclear center (BNC) formed by heme A3 and copper B (CU(B)). The BNC reduces molecular oxygen to 2 water molecules using 4 electrons from cytochrome c in the IMS and 4 protons from the mitochondrial matrix. The sequence is that of Cytochrome c oxidase subunit 3 (COIII) from Patiria pectinifera (Starfish).